Here is a 260-residue protein sequence, read N- to C-terminus: Transforming acid coiled-coil-containing protein 1 (260 aa).

The segment at 1–43 (MSLNTTFTKEDGTEVVIPFNGSQNGHPENEEPEVEEAAEPSSS) is disordered. Residues 108–249 (ASSEELEKAL…CDQLLNDVDV (142 aa)) adopt a coiled-coil conformation.

It belongs to the TACC family. Interacts with zyg-9 to form a heterodimer. Interacts with zyg-8 to form a heterodimer. Interacts with efa-6 (via N-terminus). Expressed in touch neurons.

The protein localises to the cytoplasm. Its subcellular location is the cytoskeleton. It is found in the spindle pole. It localises to the microtubule organizing center. The protein resides in the centrosome. The protein localises to the chromosome. Its subcellular location is the centromere. It is found in the kinetochore. It localises to the cell projection. The protein resides in the axon. The protein localises to the perikaryon. Its function is as follows. Involved in microtubule formation, polymerization and assembly, regulating microtubule nucleation and length. Plays a role in pronuclear migration and mitotic and meiotic spindle elongation during early embryogenesis. In complex with zyg-9, functions during the early stages of embryonic development to regulate microtubule assembly throughout the cell cycle. Specifically, the complex is required for the formation and growth of astral microtubules and spindle microtubules during mitotic spindle assembly. At anaphase, the complex is required for mitotic spindle positioning in one-cell stage embryos. The complex acts in a partially redundant manner with the tac-1/zyg-8 complex to regulate microtubule assembly and processes during interphase, mitosis and meiosis in embryos. Plays a role in injury-induced axonal regrowth, regeneration and microtubule stability in PLM neurons and this may be downstream of efa-6. This Caenorhabditis elegans protein is Transforming acid coiled-coil-containing protein 1.